The sequence spans 169 residues: GTP-dependent dephospho-CoA kinase (169 aa).

3 residues coordinate GTP: D45, D64, and E121.

Belongs to the GTP-dependent DPCK family.

It catalyses the reaction 3'-dephospho-CoA + GTP = GDP + CoA + H(+). It functions in the pathway cofactor biosynthesis; coenzyme A biosynthesis. Functionally, catalyzes the GTP-dependent phosphorylation of the 3'-hydroxyl group of dephosphocoenzyme A to form coenzyme A (CoA). This is GTP-dependent dephospho-CoA kinase from Methanobrevibacter smithii (strain ATCC 35061 / DSM 861 / OCM 144 / PS).